A 260-amino-acid chain; its full sequence is Snake venom serine protease gussurobin (260 aa).

The first 18 residues, 1–18, serve as a signal peptide directing secretion; sequence MVLIRVLANLLILQLSYA. The propeptide occupies 19–24; that stretch reads QKSSEL. In terms of domain architecture, Peptidase S1 spans 25–251; sequence IIGGDECNIN…YTEWIQSTIA (227 aa). 6 disulfide bridges follow: cysteine 31–cysteine 165, cysteine 52–cysteine 68, cysteine 100–cysteine 258, cysteine 144–cysteine 212, cysteine 176–cysteine 191, and cysteine 202–cysteine 227. Residues histidine 67 and aspartate 112 each act as charge relay system in the active site. 2 N-linked (GlcNAc...) asparagine glycosylation sites follow: asparagine 123 and asparagine 124. Residue serine 206 is the Charge relay system of the active site.

Belongs to the peptidase S1 family. Snake venom subfamily. As to quaternary structure, monomer. As to expression, expressed by the venom gland.

The protein localises to the secreted. Snake venom serine protease that may act in the hemostasis system of the prey. This chain is Snake venom serine protease gussurobin, found in Gloydius ussuriensis (Ussuri mamushi).